The following is a 378-amino-acid chain: 23S rRNA (uracil(747)-C(5))-methyltransferase RlmC (378 aa).

4 residues coordinate [4Fe-4S] cluster: C3, C11, C14, and C87. Residues Q212, F241, E262, and N309 each contribute to the S-adenosyl-L-methionine site. C336 functions as the Nucleophile in the catalytic mechanism.

The protein belongs to the class I-like SAM-binding methyltransferase superfamily. RNA M5U methyltransferase family. RlmC subfamily.

It catalyses the reaction uridine(747) in 23S rRNA + S-adenosyl-L-methionine = 5-methyluridine(747) in 23S rRNA + S-adenosyl-L-homocysteine + H(+). Functionally, catalyzes the formation of 5-methyl-uridine at position 747 (m5U747) in 23S rRNA. This Shewanella pealeana (strain ATCC 700345 / ANG-SQ1) protein is 23S rRNA (uracil(747)-C(5))-methyltransferase RlmC.